Here is a 431-residue protein sequence, read N- to C-terminus: Tol-Pal system protein TolB (431 aa).

A signal peptide spans methionine 1–alanine 26. The segment at proline 411–glutamine 431 is disordered.

Belongs to the TolB family. In terms of assembly, the Tol-Pal system is composed of five core proteins: the inner membrane proteins TolA, TolQ and TolR, the periplasmic protein TolB and the outer membrane protein Pal. They form a network linking the inner and outer membranes and the peptidoglycan layer.

The protein localises to the periplasm. Part of the Tol-Pal system, which plays a role in outer membrane invagination during cell division and is important for maintaining outer membrane integrity. In Burkholderia lata (strain ATCC 17760 / DSM 23089 / LMG 22485 / NCIMB 9086 / R18194 / 383), this protein is Tol-Pal system protein TolB.